Here is a 182-residue protein sequence, read N- to C-terminus: Epoxyqueuosine reductase QueH (182 aa).

The [4Fe-4S] cluster site is built by Cys-10, Cys-11, Cys-85, and Cys-88. Cysteines 165 and 167 form a disulfide.

It belongs to the QueH family.

It catalyses the reaction epoxyqueuosine(34) in tRNA + AH2 = queuosine(34) in tRNA + A + H2O. It functions in the pathway tRNA modification; tRNA-queuosine biosynthesis. In terms of biological role, catalyzes the conversion of epoxyqueuosine (oQ) to queuosine (Q), which is a hypermodified base found in the wobble positions of tRNA(Asp), tRNA(Asn), tRNA(His) and tRNA(Tyr). The sequence is that of Epoxyqueuosine reductase QueH from Dehalococcoides mccartyi (strain ATCC BAA-2266 / KCTC 15142 / 195) (Dehalococcoides ethenogenes (strain 195)).